Reading from the N-terminus, the 369-residue chain is MVRIVPSARRTRAPAKLDGRSTPDIAMSLVTTASPLTTADTYTPAADSDAPPAVRGELVINLPMRHAGQRELRLRYELVGAEQAPVVFVAGGISAHRHLAASAVFPEKGWVEGLVGAGRALDPASRRLLAFDFLGADGSLDAPIDTADQADAIAALLDALGIARLHGFVGYSYGALVGLQFASRHAARLHTLVAVSGAHRAHPYAAAWRALQRRAVALGQLQCAEHHGLALARQFAMLSYRTPEEFSERFDAPPELINGRVRVAAEDYLDAAGAQYVARTPVNAYLRLSESIDLHRIDPAAVAVPTVVVAVEGDRLVPLADLVSLVEGLGPRGSLRVLRSPFGHDAFLKEIDRIDAILTTALRTTGETA.

The interval 1-21 (MVRIVPSARRTRAPAKLDGRS) is disordered. Residues 86 to 350 (VVFVAGGISA…PFGHDAFLKE (265 aa)) enclose the AB hydrolase-1 domain. Positions 92-95 (GISA) are important for substrate specificity. Catalysis depends on Ser-172, which acts as the Nucleophile. Arg-233 contributes to the substrate binding site. Residues Asp-314 and His-344 contribute to the active site. Asp-345 is a substrate binding site.

It belongs to the AB hydrolase superfamily. MetX family. As to quaternary structure, homodimer.

The protein resides in the cytoplasm. It catalyses the reaction L-homoserine + succinyl-CoA = O-succinyl-L-homoserine + CoA. Its pathway is amino-acid biosynthesis; L-methionine biosynthesis via de novo pathway; O-succinyl-L-homoserine from L-homoserine: step 1/1. Functionally, transfers a succinyl group from succinyl-CoA to L-homoserine, forming succinyl-L-homoserine. This is Homoserine O-succinyltransferase from Xanthomonas campestris pv. campestris (strain ATCC 33913 / DSM 3586 / NCPPB 528 / LMG 568 / P 25).